A 446-amino-acid chain; its full sequence is Maltoporin (446 aa).

The signal sequence occupies residues 1–25 (MMITLRKLPLAVAVAAGVMSAQAMA).

Belongs to the porin LamB (TC 1.B.3) family. As to quaternary structure, homotrimer formed of three 18-stranded antiparallel beta-barrels, containing three independent channels.

It localises to the cell outer membrane. It catalyses the reaction beta-maltose(in) = beta-maltose(out). Functionally, involved in the transport of maltose and maltodextrins. This Escherichia coli O6:K15:H31 (strain 536 / UPEC) protein is Maltoporin.